The primary structure comprises 541 residues: Glutamyl-tRNA(Gln) amidotransferase subunit B, mitochondrial (541 aa).

This sequence belongs to the GatB/GatE family. GatB subfamily. In terms of assembly, subunit of the heterotrimeric GatFAB amidotransferase (AdT) complex, composed of A, B and F subunits.

It is found in the mitochondrion. It catalyses the reaction L-glutamyl-tRNA(Gln) + L-glutamine + ATP + H2O = L-glutaminyl-tRNA(Gln) + L-glutamate + ADP + phosphate + H(+). In terms of biological role, allows the formation of correctly charged Gln-tRNA(Gln) through the transamidation of misacylated Glu-tRNA(Gln) in the mitochondria. The reaction takes place in the presence of glutamine and ATP through an activated gamma-phospho-Glu-tRNA(Gln). The polypeptide is Glutamyl-tRNA(Gln) amidotransferase subunit B, mitochondrial (Saccharomyces cerevisiae (strain YJM789) (Baker's yeast)).